The sequence spans 208 residues: Uracil phosphoribosyltransferase (208 aa).

5-phospho-alpha-D-ribose 1-diphosphate contacts are provided by residues Arg-78, Arg-103, and 130–138; that span reads DPMLATGGS. Uracil is bound by residues Ile-193 and 198-200; that span reads GDA. Asp-199 contacts 5-phospho-alpha-D-ribose 1-diphosphate.

It belongs to the UPRTase family. It depends on Mg(2+) as a cofactor.

It catalyses the reaction UMP + diphosphate = 5-phospho-alpha-D-ribose 1-diphosphate + uracil. The protein operates within pyrimidine metabolism; UMP biosynthesis via salvage pathway; UMP from uracil: step 1/1. Its activity is regulated as follows. Allosterically activated by GTP. Catalyzes the conversion of uracil and 5-phospho-alpha-D-ribose 1-diphosphate (PRPP) to UMP and diphosphate. The chain is Uracil phosphoribosyltransferase from Tolumonas auensis (strain DSM 9187 / NBRC 110442 / TA 4).